The primary structure comprises 380 residues: MSIASTQADKKSSNHPDKIKISGVILVDKPQGMTSQQVVSKVKYLFKSPNHDSKKAGHTGTLDPMATGLLPICLGEATKFSHYQLDADKSYQATILLGSQTDTGDADGQVTAEATISAFDDTMLDKIAQQFLGAQQQIPPMYSALKKDGKKLYEYARAGIEVDRPPRDIILKAIELKAIDEQQIQLTVTCSKGTYVRVLAEDIAKAIGTLGHLTALSRLQVGDFKIDETITLANLEALALEQRQTYLLPVDACIDINAELTLSSEQCERVQMGQRLNVIDQLTNDLQSYITSAIEQHLSTSNKNAAVNQNVEDDNDDNDDNDDNDDNDDNDDNDDNDDNAQQLLHEIPVDIRLIDEHGTFIGLGAVSLNGRLQPKKLIQL.

The active-site Nucleophile is the Asp-63. Residues 309-339 (QNVEDDNDDNDDNDDNDDNDDNDDNDDNDDN) are disordered. Acidic residues predominate over residues 311-338 (VEDDNDDNDDNDDNDDNDDNDDNDDNDD).

The protein belongs to the pseudouridine synthase TruB family. Type 1 subfamily.

The enzyme catalyses uridine(55) in tRNA = pseudouridine(55) in tRNA. In terms of biological role, responsible for synthesis of pseudouridine from uracil-55 in the psi GC loop of transfer RNAs. This Psychrobacter arcticus (strain DSM 17307 / VKM B-2377 / 273-4) protein is tRNA pseudouridine synthase B.